The primary structure comprises 246 residues: Ribulose-phosphate 3-epimerase (246 aa).

Ser9 serves as a coordination point for substrate. His34, Asp36, and His83 together coordinate a divalent metal cation. The active-site Proton acceptor is Asp36. Residues His83, Gly159–Gly162, Asp188–Gly190, and Gly210–Ser212 each bind substrate. Asp188 is an a divalent metal cation binding site. The active-site Proton donor is the Asp188.

Belongs to the ribulose-phosphate 3-epimerase family. Co(2+) is required as a cofactor. Requires Fe(2+) as cofactor. It depends on Mn(2+) as a cofactor. Zn(2+) serves as cofactor.

It catalyses the reaction D-ribulose 5-phosphate = D-xylulose 5-phosphate. Its pathway is carbohydrate degradation; pentose phosphate pathway; D-xylulose 5-phosphate from D-ribulose 5-phosphate (non-oxidative stage): step 1/1. Functionally, catalyzes the reversible epimerization of D-ribulose 5-phosphate to D-xylulose 5-phosphate. This Candida glabrata (strain ATCC 2001 / BCRC 20586 / JCM 3761 / NBRC 0622 / NRRL Y-65 / CBS 138) (Yeast) protein is Ribulose-phosphate 3-epimerase (RPE1).